Reading from the N-terminus, the 453-residue chain is GTPase Der (453 aa).

EngA-type G domains follow at residues 4–169 (PVVA…PPTD) and 178–353 (INVA…EQHR). Residues 10 to 17 (GRPNVGKS), 57 to 61 (DTGGL), 120 to 123 (NKCE), 184 to 191 (GRPNVGKS), 231 to 235 (DTAGI), and 296 to 299 (NKWD) contribute to the GTP site. Residues 354 to 439 (RRVSTSVINE…PIRLLWRGKK (86 aa)) form the KH-like domain.

Belongs to the TRAFAC class TrmE-Era-EngA-EngB-Septin-like GTPase superfamily. EngA (Der) GTPase family. As to quaternary structure, associates with the 50S ribosomal subunit.

In terms of biological role, GTPase that plays an essential role in the late steps of ribosome biogenesis. In Cyanothece sp. (strain PCC 7425 / ATCC 29141), this protein is GTPase Der.